Reading from the N-terminus, the 565-residue chain is Periplasmic trehalase (565 aa).

Residues Met-1 to Ala-30 form the signal peptide. Residues Arg-152, Trp-159 to Asp-160, Asn-196, Arg-205 to Gln-207, Arg-277 to Glu-279, and Gly-310 each bind substrate. Residues Asp-312 and Glu-496 each act as proton donor/acceptor in the active site. Glu-511 contributes to the substrate binding site. The disordered stretch occupies residues Cys-539–Pro-565.

This sequence belongs to the glycosyl hydrolase 37 family. As to quaternary structure, monomer.

The protein localises to the periplasm. The catalysed reaction is alpha,alpha-trehalose + H2O = alpha-D-glucose + beta-D-glucose. Provides the cells with the ability to utilize trehalose at high osmolarity by splitting it into glucose molecules that can subsequently be taken up by the phosphotransferase-mediated uptake system. This Escherichia coli O1:K1 / APEC protein is Periplasmic trehalase.